A 344-amino-acid polypeptide reads, in one-letter code: L-rhamnose-proton symporter (344 aa).

The next 10 helical transmembrane spans lie at 4-24, 38-58, 68-88, 101-121, 131-151, 175-195, 214-234, 259-279, 290-310, and 321-341; these read AITM…CFYA, WSVG…ALLL, FNLS…IGNI, MGIG…TPII, TEGG…VGIV, LLLA…MNAA, LPSY…FCFI, ILLS…YAWG, MSWM…GLVL, and VAVL…VGLG.

Belongs to the L-rhamnose transporter (TC 2.A.7.6) family.

It localises to the cell inner membrane. It catalyses the reaction L-rhamnopyranose(in) + H(+)(in) = L-rhamnopyranose(out) + H(+)(out). Uptake of L-rhamnose across the cytoplasmic membrane with the concomitant transport of protons into the cell (symport system). The sequence is that of L-rhamnose-proton symporter from Salmonella typhi.